Reading from the N-terminus, the 192-residue chain is UPF0149 protein Spro_3920 (192 aa).

This sequence belongs to the UPF0149 family.

This Serratia proteamaculans (strain 568) protein is UPF0149 protein Spro_3920.